The chain runs to 520 residues: Cholesterol side-chain cleavage enzyme, mitochondrial (520 aa).

The transit peptide at 1–39 directs the protein to the mitochondrion; sequence MLARGLPFRSALVKACPPLLNTGREGWGHHRVGTGEGAG. Residues 27–47 form a disordered region; the sequence is WGHHRVGTGEGAGISTRTPRP. Cys461 provides a ligand contact to heme.

The protein belongs to the cytochrome P450 family. In terms of assembly, interacts with FDX1/adrenodoxin. The cofactor is heme.

It localises to the mitochondrion inner membrane. The catalysed reaction is 6 reduced [adrenodoxin] + cholesterol + 3 O2 + 6 H(+) = 4-methylpentanal + pregnenolone + 6 oxidized [adrenodoxin] + 4 H2O. It carries out the reaction 2 reduced [adrenodoxin] + cholesterol + O2 + 2 H(+) = (22R)-hydroxycholesterol + 2 oxidized [adrenodoxin] + H2O. It catalyses the reaction (22R)-hydroxycholesterol + 2 reduced [adrenodoxin] + O2 + 2 H(+) = (20R,22R)-20,22-dihydroxycholesterol + 2 oxidized [adrenodoxin] + H2O. The enzyme catalyses (20R,22R)-20,22-dihydroxycholesterol + 2 reduced [adrenodoxin] + O2 + 2 H(+) = 4-methylpentanal + pregnenolone + 2 oxidized [adrenodoxin] + 2 H2O. The protein operates within lipid metabolism; C21-steroid hormone metabolism. Its pathway is steroid metabolism; cholesterol metabolism. Functionally, a cytochrome P450 monooxygenase that catalyzes the side-chain hydroxylation and cleavage of cholesterol to pregnenolone, the precursor of most steroid hormones. Catalyzes three sequential oxidation reactions of cholesterol, namely the hydroxylation at C22 followed with the hydroxylation at C20 to yield 20R,22R-hydroxycholesterol that is further cleaved between C20 and C22 to yield the C21-steroid pregnenolone and 4-methylpentanal. Mechanistically, uses molecular oxygen inserting one oxygen atom into a substrate and reducing the second into a water molecule. Two electrons are provided by NADPH via a two-protein mitochondrial transfer system comprising flavoprotein FDXR (adrenodoxin/ferredoxin reductase) and nonheme iron-sulfur protein FDX1 or FDX2 (adrenodoxin/ferredoxin). In Ovis aries (Sheep), this protein is Cholesterol side-chain cleavage enzyme, mitochondrial.